The chain runs to 398 residues: Riboflavin transporter RfnT (398 aa).

12 helical membrane-spanning segments follow: residues 13 to 35 (ILTI…GGLV), 45 to 67 (LVTL…AAFF), 74 to 91 (RNAY…GVIA), 95 to 117 (IFAA…ASYV), 137 to 156 (ISWV…QLVI), 166 to 188 (MFAG…LFML), 220 to 242 (VAAG…IAMV), 252 to 274 (ALGI…KLIT), 281 to 300 (ITAL…LGGF), 305 to 324 (FWGA…IGAT), 345 to 367 (FIMF…SSGW), and 372 to 389 (WLVF…ILRL).

It belongs to the major facilitator superfamily.

The protein localises to the cell membrane. Transports riboflavin into the cell. This chain is Riboflavin transporter RfnT, found in Brucella anthropi (strain ATCC 49188 / DSM 6882 / CCUG 24695 / JCM 21032 / LMG 3331 / NBRC 15819 / NCTC 12168 / Alc 37) (Ochrobactrum anthropi).